The sequence spans 308 residues: MSQLRKAPEGILGFPVAPFNREGKLEEEALYENIRFLLDEGLEAVFIACGSGEFQSLSTKEYEQMVEIAVSAADGKVPVYTGVGGNLSTALEWARISEEKGADGYLILPPYLIHGEQEGLYQYTKTIIESTDLNAIIYQRDNAVLTLEQIQRLTDLEQLVGLKDGIGDMALNISLSYTIGDRLGWLNGMPMAEVTMPAYAPIGFTSYSSAISNYIPHISRMFYEALLNGNDRLVKEIYEQVIIPINEIRKLRKGYAVSLIKAGMEIMGLHVKNTARPPIVPVEKEHCRQLENILKNAMARYPKTTAAL.

The protein belongs to the DapA family.

It catalyses the reaction 5-dehydro-4-deoxy-D-glucarate + H(+) = 2,5-dioxopentanoate + CO2 + H2O. It functions in the pathway carbohydrate acid metabolism; D-glucarate degradation; 2,5-dioxopentanoate from D-glucarate: step 2/2. The protein is Probable 5-dehydro-4-deoxyglucarate dehydratase of Bacillus licheniformis (strain ATCC 14580 / DSM 13 / JCM 2505 / CCUG 7422 / NBRC 12200 / NCIMB 9375 / NCTC 10341 / NRRL NRS-1264 / Gibson 46).